Consider the following 535-residue polypeptide: Beta-amylase (535 aa).

Aspartate 51, histidine 91, and aspartate 99 together coordinate substrate. The Proton donor role is filled by glutamate 184. Residues lysine 293, histidine 298, and threonine 340 each coordinate substrate. Glutamate 378 acts as the Proton acceptor in catalysis. Residues 379 to 380 (NA) and arginine 418 contribute to the substrate site. 3 consecutive repeat copies span residues 489–499 (GPTGGMGGQAE), 500–510 (GPTCGMGGQVK), and 511–521 (GPTGGMGGQAE). The segment at 489–532 (GPTGGMGGQAEGPTCGMGGQVKGPTGGMGGQAEDPTSGIGGELP) is 4 X 11 AA tandem repeats. A disordered region spans residues 513–535 (TGGMGGQAEDPTSGIGGELPATM). Residues 522-532 (DPTSGIGGELP) form a 4; approximate repeat.

The protein belongs to the glycosyl hydrolase 14 family. In terms of assembly, monomer.

It carries out the reaction Hydrolysis of (1-&gt;4)-alpha-D-glucosidic linkages in polysaccharides so as to remove successive maltose units from the non-reducing ends of the chains.. This chain is Beta-amylase (BMY1), found in Hordeum vulgare (Barley).